A 406-amino-acid chain; its full sequence is Arginine biosynthesis bifunctional protein ArgJ (406 aa).

Residues T156, K182, T193, E279, N401, and T406 each contribute to the substrate site. T193 (nucleophile) is an active-site residue.

The protein belongs to the ArgJ family. Heterotetramer of two alpha and two beta chains.

Its subcellular location is the cytoplasm. It carries out the reaction N(2)-acetyl-L-ornithine + L-glutamate = N-acetyl-L-glutamate + L-ornithine. The enzyme catalyses L-glutamate + acetyl-CoA = N-acetyl-L-glutamate + CoA + H(+). It participates in amino-acid biosynthesis; L-arginine biosynthesis; L-ornithine and N-acetyl-L-glutamate from L-glutamate and N(2)-acetyl-L-ornithine (cyclic): step 1/1. It functions in the pathway amino-acid biosynthesis; L-arginine biosynthesis; N(2)-acetyl-L-ornithine from L-glutamate: step 1/4. In terms of biological role, catalyzes two activities which are involved in the cyclic version of arginine biosynthesis: the synthesis of N-acetylglutamate from glutamate and acetyl-CoA as the acetyl donor, and of ornithine by transacetylation between N(2)-acetylornithine and glutamate. This is Arginine biosynthesis bifunctional protein ArgJ from Bacillus licheniformis (strain ATCC 14580 / DSM 13 / JCM 2505 / CCUG 7422 / NBRC 12200 / NCIMB 9375 / NCTC 10341 / NRRL NRS-1264 / Gibson 46).